We begin with the raw amino-acid sequence, 76 residues long: UPF0270 protein PSPA7_1664 (76 aa).

The protein belongs to the UPF0270 family.

This Pseudomonas paraeruginosa (strain DSM 24068 / PA7) (Pseudomonas aeruginosa (strain PA7)) protein is UPF0270 protein PSPA7_1664.